A 187-amino-acid polypeptide reads, in one-letter code: Small ribosomal subunit protein uS10m (187 aa).

It belongs to the universal ribosomal protein uS10 family. As to quaternary structure, component of the mitochondrial ribosome small subunit (28S) which comprises a 12S rRNA and about 30 distinct proteins.

The protein localises to the mitochondrion. The sequence is that of Small ribosomal subunit protein uS10m (mrps10) from Danio rerio (Zebrafish).